A 789-amino-acid polypeptide reads, in one-letter code: Cell pattern formation-associated protein stuA (789 aa).

Disordered stretches follow at residues 50–131 and 205–224; these read PALS…NTVG and PGGV…SVSS. Composition is skewed to polar residues over residues 55–69, 76–88, and 115–131; these read PTAS…SYRT, ASHN…SLSG, and LDSS…NTVG. The 107-residue stretch at 272–378 folds into the HTH APSES-type domain; sequence RVTATLWEDE…HNIGGLLYHP (107 aa). The segment at residues 306–327 is a DNA-binding region (H-T-H motif); it reads GTKLLNVAGMTRGRRDGILKSE. 3 disordered regions span residues 389–459, 487–543, and 616–789; these read QESQ…ASSL, SIDT…YAPQ, and HDSA…ARRR. Polar residues-rich tracts occupy residues 419-438, 487-529, 620-636, 645-667, and 676-713; these read LQTP…SQSA, SIDT…SKSY, GYNT…NPSV, QLAS…TPRT, and SGYN…SVAS. The segment at 731–758 is nuclear localization domain; that stretch reads KRMREDDDVDQIVRPDSRGAEYESKRRK. Over residues 741–754 the composition is skewed to basic and acidic residues; it reads QIVRPDSRGAEYES.

It belongs to the EFG1/PHD1/stuA family.

Its subcellular location is the nucleus. Transcription factor that regulates asexual reproduction. Binds the StuA-response elements (StRE) with the consensus sequence 5'-(A/T)CGCG(T/A)N(A/C)-3' at the promoters of target genes. This is Cell pattern formation-associated protein stuA from Aspergillus flavus (strain ATCC 200026 / FGSC A1120 / IAM 13836 / NRRL 3357 / JCM 12722 / SRRC 167).